Reading from the N-terminus, the 203-residue chain is MGDTDVTSDANAPWLIVGLGNPGPEYARNRHNVGFMVADLLAERIGGKFKRAGKAQAQVIEGRIGPPGPANRRVILAKPMSYMNLSGGPVNALREFYKVPVANIVAVHDELDIDYGVLRLKLGGGDNGHNGLKSMTKAMGPDYHRVRFGIGRPPGRMQVADFVLKDFASAERKELDYLVDRAADAAECLVIEGLERAQGTYNS.

TRNA is bound at residue Y26. H31 acts as the Proton acceptor in catalysis. Y82, N84, and N130 together coordinate tRNA.

This sequence belongs to the PTH family. As to quaternary structure, monomer.

The protein resides in the cytoplasm. The catalysed reaction is an N-acyl-L-alpha-aminoacyl-tRNA + H2O = an N-acyl-L-amino acid + a tRNA + H(+). Functionally, hydrolyzes ribosome-free peptidyl-tRNAs (with 1 or more amino acids incorporated), which drop off the ribosome during protein synthesis, or as a result of ribosome stalling. In terms of biological role, catalyzes the release of premature peptidyl moieties from peptidyl-tRNA molecules trapped in stalled 50S ribosomal subunits, and thus maintains levels of free tRNAs and 50S ribosomes. The polypeptide is Peptidyl-tRNA hydrolase (Streptomyces avermitilis (strain ATCC 31267 / DSM 46492 / JCM 5070 / NBRC 14893 / NCIMB 12804 / NRRL 8165 / MA-4680)).